The chain runs to 397 residues: MGCIKVISVFLAAIAAVDARAFFHNRGGSDVIPNSYIVVMKDGVTTEDFDSHISTVAATHNLNKAKRGSETVGHKDSFNINGWRAYNGHFDEATIESILNDDKVNYVEHDRVVKLAALVTQPNAPTWGLGRVSHRAPGNRDFVYDSSAGQGITIYGVDTGIDIRHPEFAGRIRWGTNTVDNDNTDGNGHGTHTAGTFAGTTYGVAKKANIVAVKVLSAGGSGSTAGVIKGIDWCVTDARSRNALGKAALNLSLGGSFSQANNDAVTRAQEAGIFVAVAAGNDNRDARNYSPASAPAVCTAASSTIDDQKSSFSNWGSIVDIYAPGSSILSAAPGGGTRTLSGTSMASPHVCGVGAAMLAQGVSVAQVCNRLKQIGNAVIRNPGTSTTNRLLYNGSGQ.

Residues 1–19 form the signal peptide; it reads MGCIKVISVFLAAIAAVDA. Positions 20–116 are excised as a propeptide; sequence RAFFHNRGGS…VEHDRVVKLA (97 aa). The Inhibitor I9 domain occupies 35-116; it reads SYIVVMKDGV…VEHDRVVKLA (82 aa). A Peptidase S8 domain is found at 126 to 397; sequence TWGLGRVSHR…NRLLYNGSGQ (272 aa). Residues D158 and H189 each act as charge relay system in the active site. An N-linked (GlcNAc...) asparagine glycan is attached at N250. S344 serves as the catalytic Charge relay system. N393 is a glycosylation site (N-linked (GlcNAc...) asparagine).

Belongs to the peptidase S8 family.

The protein localises to the secreted. In terms of biological role, secreted subtilisin-like serine protease with keratinolytic activity that contributes to pathogenicity. The chain is Subtilisin-like protease 3 (SUB3) from Trichophyton equinum (Horse ringworm fungus).